Here is a 101-residue protein sequence, read N- to C-terminus: Urease subunit beta (101 aa).

Belongs to the urease beta subunit family. As to quaternary structure, heterotrimer of UreA (gamma), UreB (beta) and UreC (alpha) subunits. Three heterotrimers associate to form the active enzyme.

The protein localises to the cytoplasm. It carries out the reaction urea + 2 H2O + H(+) = hydrogencarbonate + 2 NH4(+). It functions in the pathway nitrogen metabolism; urea degradation; CO(2) and NH(3) from urea (urease route): step 1/1. This is Urease subunit beta from Pseudomonas fluorescens (strain ATCC BAA-477 / NRRL B-23932 / Pf-5).